The sequence spans 51 residues: Large ribosomal subunit protein bL33 (51 aa).

This sequence belongs to the bacterial ribosomal protein bL33 family.

This is Large ribosomal subunit protein bL33 from Vesicomyosocius okutanii subsp. Calyptogena okutanii (strain HA).